Consider the following 185-residue polypeptide: Ribosome-recycling factor (185 aa).

Belongs to the RRF family.

It localises to the cytoplasm. Responsible for the release of ribosomes from messenger RNA at the termination of protein biosynthesis. May increase the efficiency of translation by recycling ribosomes from one round of translation to another. The chain is Ribosome-recycling factor from Thermosipho melanesiensis (strain DSM 12029 / CIP 104789 / BI429).